We begin with the raw amino-acid sequence, 384 residues long: GDSL esterase/lipase At1g28670 (384 aa).

The signal sequence occupies residues 1-24; that stretch reads MASSLKKLISSFLLVLYSTTIIVA. Ser-42 acts as the Nucleophile in catalysis. Asn-105, Asn-138, and Asn-321 each carry an N-linked (GlcNAc...) asparagine glycan. Residues Asp-346 and His-349 contribute to the active site.

It belongs to the 'GDSL' lipolytic enzyme family.

Its subcellular location is the secreted. This chain is GDSL esterase/lipase At1g28670, found in Arabidopsis thaliana (Mouse-ear cress).